Reading from the N-terminus, the 61-residue chain is Large ribosomal subunit protein uL30 (61 aa).

It belongs to the universal ribosomal protein uL30 family. As to quaternary structure, part of the 50S ribosomal subunit.

This Bordetella petrii (strain ATCC BAA-461 / DSM 12804 / CCUG 43448) protein is Large ribosomal subunit protein uL30.